A 384-amino-acid polypeptide reads, in one-letter code: Chorismate synthase (384 aa).

Arg39 and Arg45 together coordinate NADP(+). FMN-binding positions include 130 to 132 (RSS), 248 to 249 (NA), Gly292, 307 to 311 (KPIPT), and Arg333.

Belongs to the chorismate synthase family. As to quaternary structure, homotetramer. Requires FMNH2 as cofactor.

The enzyme catalyses 5-O-(1-carboxyvinyl)-3-phosphoshikimate = chorismate + phosphate. Its pathway is metabolic intermediate biosynthesis; chorismate biosynthesis; chorismate from D-erythrose 4-phosphate and phosphoenolpyruvate: step 7/7. Functionally, catalyzes the anti-1,4-elimination of the C-3 phosphate and the C-6 proR hydrogen from 5-enolpyruvylshikimate-3-phosphate (EPSP) to yield chorismate, which is the branch point compound that serves as the starting substrate for the three terminal pathways of aromatic amino acid biosynthesis. This reaction introduces a second double bond into the aromatic ring system. This is Chorismate synthase from Exiguobacterium sibiricum (strain DSM 17290 / CCUG 55495 / CIP 109462 / JCM 13490 / 255-15).